Consider the following 196-residue polypeptide: Interleukin-18 (196 aa).

Residues 1-29 (MSCEEIAVCAVRLRENLCLYFEELECDAF) constitute a propeptide that is removed on maturation.

The protein belongs to the IL-1 family. As to quaternary structure, forms a ternary complex with ligand-binding receptor subunit IL18R1 and signaling receptor subunit IL18RAP at the plasma membrane. Mature IL18 first binds to IL18R1 forming a low affinity binary complex, which then interacts with IL18RAP to form a high affinity ternary complex that signals inside the cell. Interacts with cargo receptor TMED10; the interaction mediates the translocation from the cytoplasm into the ERGIC (endoplasmic reticulum-Golgi intermediate compartment) and thereby secretion. The pro-IL-18 precursor is processed by CASP1 or CASP4 to yield the active form.

Its subcellular location is the cytoplasm. It is found in the secreted. Functionally, augments natural killer cell activity in spleen cells and stimulates interferon gamma production in T-helper type I cells. Involved in transduction of inflammation downstream of pyroptosis: its mature form is specifically released in the extracellular milieu by passing through the gasdermin-D (GSDMD) pore. This is Interleukin-18 (IL18) from Gallus gallus (Chicken).